We begin with the raw amino-acid sequence, 502 residues long: Galactose/methyl galactoside import ATP-binding protein MglA (502 aa).

ABC transporter domains are found at residues 10–245 and 255–502; these read LEMT…VGRE and NEPK…SRYL. 42–49 provides a ligand contact to ATP; it reads GENGAGKS.

The protein belongs to the ABC transporter superfamily. Galactose/methyl galactoside importer (TC 3.A.1.2.3) family. As to quaternary structure, the complex is composed of one ATP-binding protein (MglA), two transmembrane proteins (MglC) and a solute-binding protein (MglB).

It localises to the cell inner membrane. It carries out the reaction D-galactose(out) + ATP + H2O = D-galactose(in) + ADP + phosphate + H(+). The catalysed reaction is methyl beta-D-galactoside(out) + ATP + H2O = methyl beta-D-galactoside(in) + ADP + phosphate + H(+). In terms of biological role, part of the ABC transporter complex MglABC involved in galactose/methyl galactoside import. Responsible for energy coupling to the transport system. This chain is Galactose/methyl galactoside import ATP-binding protein MglA, found in Vibrio cholerae serotype O1 (strain ATCC 39315 / El Tor Inaba N16961).